The chain runs to 294 residues: N-acetylmuramic acid 6-phosphate etherase (294 aa).

An SIS domain is found at 54 to 217 (VIKSFEEEGR…STASMIGVGK (164 aa)). E82 serves as the catalytic Proton donor. The active site involves E113.

Belongs to the GCKR-like family. MurNAc-6-P etherase subfamily. Homodimer.

The enzyme catalyses N-acetyl-D-muramate 6-phosphate + H2O = N-acetyl-D-glucosamine 6-phosphate + (R)-lactate. Its pathway is amino-sugar metabolism; N-acetylmuramate degradation. Functionally, specifically catalyzes the cleavage of the D-lactyl ether substituent of MurNAc 6-phosphate, producing GlcNAc 6-phosphate and D-lactate. The polypeptide is N-acetylmuramic acid 6-phosphate etherase (Bacillus cereus (strain AH187)).